Reading from the N-terminus, the 215-residue chain is Probable phosphoglycerate mutase GpmB (215 aa).

Substrate-binding positions include 8 to 15, 21 to 22, R58, R60, 82 to 85, 104 to 105, and 151 to 152; these read RHGETQWN, QG, ELDM, RR, and GI. H9 (tele-phosphohistidine intermediate) is an active-site residue. The active-site Proton donor/acceptor is E82.

The protein belongs to the phosphoglycerate mutase family. GpmB subfamily.

It catalyses the reaction (2R)-2-phosphoglycerate = (2R)-3-phosphoglycerate. It participates in carbohydrate degradation; glycolysis; pyruvate from D-glyceraldehyde 3-phosphate: step 3/5. This Klebsiella pneumoniae subsp. pneumoniae (strain ATCC 700721 / MGH 78578) protein is Probable phosphoglycerate mutase GpmB.